A 1733-amino-acid chain; its full sequence is Protein NETWORKED 1D (1733 aa).

The NAB domain maps to 12–92 (YSWWWDSHIS…ERYDHATGVI (81 aa)). Coiled-coil stretches lie at residues 195–816 (KEIN…RESS), 897–931 (LIAENQDIKEASKLLEKLVSELEEENIGKQVQIDS), 960–1043 (DENS…QKLI), and 1196–1386 (ARSA…NDLM). Positions 1456–1476 (LKTSSARRSRRRNGSLRKQNH) are disordered. The segment covering 1460 to 1470 (SARRSRRRNGS) has biased composition (basic residues). 2 coiled-coil regions span residues 1553 to 1627 (ANKR…KVQN) and 1653 to 1686 (SEQARRGSEKIGRLQLEIQRLQFLLLKLEGDRED). A disordered region spans residues 1628-1656 (GFERSDGSKSSMDLDENESSRRRRISEQA).

This sequence belongs to the NET family.

In terms of biological role, plant-specific actin binding protein. May be part of a membrane-cytoskeletal adapter complex. This chain is Protein NETWORKED 1D, found in Arabidopsis thaliana (Mouse-ear cress).